A 147-amino-acid polypeptide reads, in one-letter code: Cyanate hydratase (147 aa).

Residues Arg88, Glu91, and Ser114 contribute to the active site.

It belongs to the cyanase family.

It carries out the reaction cyanate + hydrogencarbonate + 3 H(+) = NH4(+) + 2 CO2. In terms of biological role, catalyzes the reaction of cyanate with bicarbonate to produce ammonia and carbon dioxide. This Albidiferax ferrireducens (strain ATCC BAA-621 / DSM 15236 / T118) (Rhodoferax ferrireducens) protein is Cyanate hydratase.